Reading from the N-terminus, the 81-residue chain is Acyl carrier protein (81 aa).

Positions 2 to 77 (ASVEEKVKQI…DAVDYITAHA (76 aa)) constitute a Carrier domain. Ser37 carries the O-(pantetheine 4'-phosphoryl)serine modification.

Belongs to the acyl carrier protein (ACP) family. In terms of processing, 4'-phosphopantetheine is transferred from CoA to a specific serine of apo-ACP by AcpS. This modification is essential for activity because fatty acids are bound in thioester linkage to the sulfhydryl of the prosthetic group.

Its subcellular location is the cytoplasm. Its pathway is lipid metabolism; fatty acid biosynthesis. Its function is as follows. Carrier of the growing fatty acid chain in fatty acid biosynthesis. This is Acyl carrier protein from Koribacter versatilis (strain Ellin345).